Consider the following 245-residue polypeptide: 1-(5-phosphoribosyl)-5-[(5-phosphoribosylamino)methylideneamino] imidazole-4-carboxamide isomerase (245 aa).

Asp-7 serves as the catalytic Proton acceptor. Asp-129 functions as the Proton donor in the catalytic mechanism.

Belongs to the HisA/HisF family.

It is found in the cytoplasm. It catalyses the reaction 1-(5-phospho-beta-D-ribosyl)-5-[(5-phospho-beta-D-ribosylamino)methylideneamino]imidazole-4-carboxamide = 5-[(5-phospho-1-deoxy-D-ribulos-1-ylimino)methylamino]-1-(5-phospho-beta-D-ribosyl)imidazole-4-carboxamide. It participates in amino-acid biosynthesis; L-histidine biosynthesis; L-histidine from 5-phospho-alpha-D-ribose 1-diphosphate: step 4/9. In Escherichia coli O17:K52:H18 (strain UMN026 / ExPEC), this protein is 1-(5-phosphoribosyl)-5-[(5-phosphoribosylamino)methylideneamino] imidazole-4-carboxamide isomerase.